The following is a 1208-amino-acid chain: Spindle pole body protein pcp1 (1208 aa).

The segment covering 1–17 (MSERDFNTQSPKFKDEN) has biased composition (basic and acidic residues). Positions 1 to 91 (MSERDFNTQS…DKYNGSLGDK (91 aa)) are disordered. A compositionally biased stretch (polar residues) spans 48 to 64 (NDKSSFQTPLRNGSYQP). Coiled coils occupy residues 151-375 (LREQ…KENQ), 387-803 (TDSM…ANIE), 874-1091 (GTET…QSTQ), and 1177-1204 (ERMKRMKNEWLKQAQLKQSLQRAAAKAK). Serine 906 carries the phosphoserine modification.

In terms of assembly, interacts with ccq1.

Its subcellular location is the nucleus. The protein resides in the cytoplasm. It localises to the cytoskeleton. The protein localises to the microtubule organizing center. It is found in the spindle pole body. In terms of biological role, spindle pole body component that binds calmodulin. Overexpression of pcp1 causes the formation of supernumerary SPB-like structures and disrupts both mitotic spindle assembly and chromosome segregation. This Schizosaccharomyces pombe (strain 972 / ATCC 24843) (Fission yeast) protein is Spindle pole body protein pcp1 (pcp1).